The following is a 183-amino-acid chain: Isopentenyl-diphosphate Delta-isomerase (183 aa).

The Mn(2+) site is built by His26 and His33. A Nudix hydrolase domain is found at 31–165 (SLHLAFSSWL…PWAFSPWMVS (135 aa)). Cys68 is an active-site residue. Residue His70 participates in Mn(2+) binding. A Mg(2+)-binding site is contributed by Glu88. Mn(2+)-binding residues include Glu115 and Glu117. Glu117 is an active-site residue.

Belongs to the IPP isomerase type 1 family. In terms of assembly, homodimer. It depends on Mg(2+) as a cofactor. Requires Mn(2+) as cofactor.

It is found in the cytoplasm. The enzyme catalyses isopentenyl diphosphate = dimethylallyl diphosphate. The protein operates within isoprenoid biosynthesis; dimethylallyl diphosphate biosynthesis; dimethylallyl diphosphate from isopentenyl diphosphate: step 1/1. Functionally, catalyzes the 1,3-allylic rearrangement of the homoallylic substrate isopentenyl (IPP) to its highly electrophilic allylic isomer, dimethylallyl diphosphate (DMAPP). In Enterobacter sp. (strain 638), this protein is Isopentenyl-diphosphate Delta-isomerase.